Reading from the N-terminus, the 271-residue chain is Auxin-responsive protein IAA5 (271 aa).

The tract at residues 1-96 (MSPPLEPHDY…RHGASSGSVA (96 aa)) is disordered. Low complexity-rich tracts occupy residues 14–33 (SAAA…SPNP) and 40–50 (PRLTLRLGLPG). The EAR-like (transcriptional repression) signature appears at 44-48 (LRLGL). Positions 151–255 (PLYVKVSMDG…RKLKIMRGSD (105 aa)) constitute a PB1 domain.

Belongs to the Aux/IAA family. In terms of assembly, homodimers and heterodimers.

The protein localises to the nucleus. Functionally, aux/IAA proteins are short-lived transcriptional factors that function as repressors of early auxin response genes at low auxin concentrations. This is Auxin-responsive protein IAA5 (IAA5) from Oryza sativa subsp. japonica (Rice).